We begin with the raw amino-acid sequence, 209 residues long: Large ribosomal subunit protein uL3 (209 aa).

The segment at 133-153 is disordered; it reads THGNSLSHRAPGSIGQNQTPG. An N5-methylglutamine modification is found at Gln-150.

It belongs to the universal ribosomal protein uL3 family. As to quaternary structure, part of the 50S ribosomal subunit. Forms a cluster with proteins L14 and L19. In terms of processing, methylated by PrmB.

Functionally, one of the primary rRNA binding proteins, it binds directly near the 3'-end of the 23S rRNA, where it nucleates assembly of the 50S subunit. This is Large ribosomal subunit protein uL3 from Pectobacterium atrosepticum (strain SCRI 1043 / ATCC BAA-672) (Erwinia carotovora subsp. atroseptica).